The chain runs to 925 residues: Proto-oncogene DBL (925 aa).

A CRAL-TRIO domain is found at 1-88; sequence MAEANPRRGK…ELGGTLQYCH (88 aa). The stretch at 221–322 is one Spectrin repeat; that stretch reads WKFEQDFQQL…EIKAKRIQLS (102 aa). The 181-residue stretch at 495–675 folds into the DH domain; that stretch reads LKNHVLNELI…LDLLKSVNDS (181 aa). One can recognise a PH domain in the interval 687–809; sequence NLNELGKMIM…WLKEIRNILL (123 aa).

It belongs to the MCF2 family. As to quaternary structure, interacts with an array of inositol phospholipids such as phosphatidylinositol 3-phosphate (PI3P), phosphatidylinositol 4-phosphate (PI4P) and phosphatidylinositol 5-phosphate (PI5P). May interact with CCPG1. In terms of processing, phosphorylation by TNK2 enhances guanine nucleotide exchange factor (GEF) activity toward Rho family proteins. Isoform 1 is expressed only in brain. Isoform 3 is expressed in heart, kidney, spleen, liver and testis. Isoform 4 is expressed in brain, heart, kidney, testis, placenta, stomach and peripheral blood. The protein is detectable in brain, heart, kidney, intestine, muscle, lung and testis.

It localises to the cytoplasm. Its subcellular location is the membrane. Its function is as follows. Guanine nucleotide exchange factor (GEF) that modulates the Rho family of GTPases. Promotes the conversion of some member of the Rho family GTPase from the GDP-bound to the GTP-bound form. Isoform 1 exhibits no activity toward RHOA, RAC1 or CDC42. Isoform 2 exhibits decreased GEF activity toward CDC42. Isoform 3 exhibits a weak but significant activity toward RAC1 and CDC42. Isoform 4 exhibits significant activity toward RHOA and CDC42. The truncated DBL oncogene is active toward RHOA, RAC1 and CDC42. This is Proto-oncogene DBL (MCF2) from Homo sapiens (Human).